The sequence spans 246 residues: Protein lin-37 homolog (246 aa).

At Met-1 the chain carries N-acetylmethionine. Residues Lys-5 and Lys-7 each participate in a glycyl lysine isopeptide (Lys-Gly) (interchain with G-Cter in SUMO2) cross-link. The segment covering Asp-36–Asp-55 has biased composition (basic and acidic residues). Disordered regions lie at residues Asp-36–Gln-90 and Pro-127–Arg-209. Phosphoserine occurs at positions 135 and 138. The span at Leu-163–Pro-172 shows a compositional bias: pro residues. A Phosphothreonine modification is found at Thr-167. Residues Ser-182 and Ser-202 each carry the phosphoserine modification.

In terms of assembly, component of the DREAM complex (also named LINC complex) at least composed of E2F4, E2F5, LIN9, LIN37, LIN52, LIN54, MYBL1, MYBL2, RBL1, RBL2, RBBP4, TFDP1 and TFDP2. The complex exists in quiescent cells where it represses cell cycle-dependent genes. It dissociates in S phase when LIN9, LIN37, LIN52 and LIN54 form a subcomplex that binds to MYBL2.

The chain is Protein lin-37 homolog (LIN37) from Bos taurus (Bovine).